Here is a 381-residue protein sequence, read N- to C-terminus: Chaperone protein DnaJ (381 aa).

Positions 5–73 (DYYEVLGVGK…EKKAAYDQYG (69 aa)) constitute a J domain. The CR-type zinc finger occupies 141–219 (GHEAQIRVPH…CHGQGKLKSQ (79 aa)). 8 residues coordinate Zn(2+): C154, C157, C171, C174, C193, C196, C207, and C210. CXXCXGXG motif repeat units lie at residues 154 to 161 (CDHCHGNG), 171 to 178 (CPTCHGAG), 193 to 200 (CPKCHGSG), and 207 to 214 (CTKCHGQG). Residues 357-381 (SVHEGGSRHSPQEQSWLDKVKSFFS) form a disordered region.

This sequence belongs to the DnaJ family. In terms of assembly, homodimer. Requires Zn(2+) as cofactor.

The protein resides in the cytoplasm. In terms of biological role, participates actively in the response to hyperosmotic and heat shock by preventing the aggregation of stress-denatured proteins and by disaggregating proteins, also in an autonomous, DnaK-independent fashion. Unfolded proteins bind initially to DnaJ; upon interaction with the DnaJ-bound protein, DnaK hydrolyzes its bound ATP, resulting in the formation of a stable complex. GrpE releases ADP from DnaK; ATP binding to DnaK triggers the release of the substrate protein, thus completing the reaction cycle. Several rounds of ATP-dependent interactions between DnaJ, DnaK and GrpE are required for fully efficient folding. Also involved, together with DnaK and GrpE, in the DNA replication of plasmids through activation of initiation proteins. This Cupriavidus necator (strain ATCC 17699 / DSM 428 / KCTC 22496 / NCIMB 10442 / H16 / Stanier 337) (Ralstonia eutropha) protein is Chaperone protein DnaJ.